Reading from the N-terminus, the 57-residue chain is MAEVRLGENESIESALRRFKKKIQKAGILSEVKRRERYEKPSLRRKRKQEAARKRNR.

The tract at residues 35 to 57 is disordered; it reads RERYEKPSLRRKRKQEAARKRNR.

This sequence belongs to the bacterial ribosomal protein bS21 family.

This chain is Small ribosomal subunit protein bS21, found in Thermosynechococcus vestitus (strain NIES-2133 / IAM M-273 / BP-1).